We begin with the raw amino-acid sequence, 134 residues long: Cytochrome c-type biogenesis protein CcmE (134 aa).

The Cytoplasmic portion of the chain corresponds to 1–7 (MKRKYRR). Residues 8 to 28 (LFVVIITLSIFAGSVVLVLGK) traverse the membrane as a helical; Signal-anchor for type II membrane protein segment. The Periplasmic segment spans residues 29 to 134 (LKNNVSFFYT…MPNKYKTNDL (106 aa)). Heme contacts are provided by histidine 120 and tyrosine 124.

The protein belongs to the CcmE/CycJ family.

It localises to the cell inner membrane. In terms of biological role, heme chaperone required for the biogenesis of c-type cytochromes. Transiently binds heme delivered by CcmC and transfers the heme to apo-cytochromes in a process facilitated by CcmF and CcmH. The chain is Cytochrome c-type biogenesis protein CcmE from Ehrlichia ruminantium (strain Welgevonden).